Reading from the N-terminus, the 339-residue chain is ADP,ATP carrier protein (339 aa).

Solcar repeat units follow at residues 39–133, 145–234, and 246–328; these read MAFV…IKGL, RFFV…AKGV, and AKWA…IKKF. Helical transmembrane passes span 41 to 70, 110 to 134, 144 to 164, 212 to 232, and 245 to 265; these read FVKD…LLLQ, LANV…KGLF, WRFF…SLLI, VSVQ…DTAK, and FAKW…SYPF. Residues arginine 115 and lysine 127 each contribute to the ADP site. Arginine 269 is a binding site for ADP. The interval 269–274 is important for transport activity; the sequence is RRRLMM. Residues 269–274 carry the Nucleotide carrier signature motif motif; that stretch reads RRRLMM. A helical transmembrane segment spans residues 305–322; it reads AWSNVLRGAGGAFVLVLY.

The protein belongs to the mitochondrial carrier (TC 2.A.29) family. In terms of assembly, monomer.

It localises to the mitochondrion inner membrane. The enzyme catalyses ADP(in) + ATP(out) = ADP(out) + ATP(in). The matrix-open state (m-state) is inhibited by the membrane-permeable bongkrekic acid (BKA). The cytoplasmic-open state (c-state) is inhibited by the membrane-impermeable toxic inhibitor carboxyatractyloside (CATR). Functionally, ADP:ATP antiporter that mediates import of ADP into the mitochondrial matrix for ATP synthesis, and export of ATP out to fuel the cell. Cycles between the cytoplasmic-open state (c-state) and the matrix-open state (m-state): operates by the alternating access mechanism with a single substrate-binding site intermittently exposed to either the cytosolic (c-state) or matrix (m-state) side of the inner mitochondrial membrane. The polypeptide is ADP,ATP carrier protein (Parachlorella kessleri (Green alga)).